Reading from the N-terminus, the 1161-residue chain is Nuclear receptor-interacting protein 1 (1161 aa).

Residues 1 to 416 are interaction with ZNF366; the sequence is MTHGEELGSD…FESSTPTTID (416 aa). Residues 21–25 carry the LXXLL motif 1 motif; the sequence is LEGLL. The interval 34–68 is disordered; the sequence is GTAINKKSAGHKEEDQNFNLSGSAFPSCQSNGPTV. The segment covering 50 to 68 has biased composition (polar residues); sequence NFNLSGSAFPSCQSNGPTV. Residues 78–335 are repression domain 1; the sequence is MLHLKKARLL…LNGQARALPA (258 aa). At serine 104 the chain carries Phosphoserine. An N6-acetyllysine; alternate modification is found at lysine 111. Residue lysine 111 forms a Glycyl lysine isopeptide (Lys-Gly) (interchain with G-Cter in SUMO2); alternate linkage. Residues 133–137 carry the LXXLL motif 2 motif; the sequence is LASLL. Position 158 is an N6-acetyllysine (lysine 158). A Glycyl lysine isopeptide (Lys-Gly) (interchain with G-Cter in SUMO2) cross-link involves residue lysine 170. The short motif at 185 to 189 is the LXXLL motif 3 element; sequence LKTLL. Residues lysine 195 and lysine 198 each participate in a glycyl lysine isopeptide (Lys-Gly) (interchain with G-Cter in SUMO2) cross-link. Threonine 207 is subject to Phosphothreonine. Serine 218 is modified (phosphoserine). The short motif at 267–271 is the LXXLL motif 4 element; that stretch reads LALLL. An N6-acetyllysine mark is found at lysine 287 and lysine 311. Position 358 is a phosphoserine (serine 358). Lysine 374 participates in a covalent cross-link: Glycyl lysine isopeptide (Lys-Gly) (interchain with G-Cter in SUMO2). The residue at position 380 (serine 380) is a Phosphoserine. The LXXLL motif 5 motif lies at 382 to 386; that stretch reads LLHLL. Residues 393-436 are disordered; that stretch reads TPMNGHSQNERASSFESSTPTTIDEYSDNNPSFTDDSSGDESSY. The segment at 411 to 701 is repression domain 2; that stretch reads TPTTIDEYSD…PAGPEPGLPG (291 aa). The tract at residues 432-473 is required for targeting to small nuclear foci; it reads DESSYSNCVPIDLSCKHRIEKPEAERPVSLENLTQSLLNTWD. Positions 441–447 match the CTBP-binding; principal site motif; the sequence is PIDLSCK. N6-acetyllysine occurs at positions 447 and 482. The residue at position 488 (serine 488) is a Phosphoserine. Positions 501–505 match the LXXLL motif 6 motif; the sequence is LLQLL. A Glycyl lysine isopeptide (Lys-Gly) (interchain with G-Cter in SUMO2) cross-link involves residue lysine 509. The segment covering 517–552 has biased composition (polar residues); it reads NASPQDIHSDGTKFSPQNYTRTSVIESPSTNRTTPV. The disordered stretch occupies residues 517–559; it reads NASPQDIHSDGTKFSPQNYTRTSVIESPSTNRTTPVSTPPLYT. Residue serine 519 is modified to Phosphoserine. The residue at position 529 (lysine 529) is an N6-acetyllysine. Residues serine 531, serine 543, and serine 565 each carry the phosphoserine modification. Residues 566–570 carry the CTBP-binding motif; it reads PINLS. 3 disordered regions span residues 604-623, 639-702, and 717-747; these read TKGK…AQNS, GLQS…LPGC, and LLGN…ERAA. Lysine 607 is modified (N6-acetyllysine). Serine 672 carries the phosphoserine modification. The LXXLL motif 7 motif lies at 714–718; that stretch reads LQLLL. The segment covering 724-747 has biased composition (basic and acidic residues); sequence GKNEKKEKTPARDEAPQEHSERAA. The repression domain 3 stretch occupies residues 736-886; that stretch reads DEAPQEHSER…TAVDTANHHS (151 aa). The interaction with ZNF366 stretch occupies residues 754–1161; sequence VKIKSEPCDD…NALTIKKESE (408 aa). Residues lysine 757 and lysine 803 each participate in a glycyl lysine isopeptide (Lys-Gly) (interchain with G-Cter in SUMO2) cross-link. Serine 808 carries the phosphoserine modification. Positions 820–824 match the LXXLL motif 8 motif; the sequence is LSRLL. Residues 829–848 are disordered; that stretch reads ESYPADEQDKSHRNSELPTL. Residues lysine 851 and lysine 902 each participate in a glycyl lysine isopeptide (Lys-Gly) (interchain with G-Cter in SUMO2) cross-link. Lysine 932 bears the N6-acetyllysine; alternate mark. Lysine 932 participates in a covalent cross-link: Glycyl lysine isopeptide (Lys-Gly) (interchain with G-Cter in SUMO2); alternate. The short motif at 937-941 is the LXXLL motif 9 element; it reads LKQLL. The CTBP-binding motif lies at 947–951; sequence VRDLS. The segment covering 950–962 has biased composition (basic and acidic residues); that stretch reads LSPHRSDSVPDTK. A disordered region spans residues 950 to 976; it reads LSPHRSDSVPDTKKKGHKNNAPGSKPE. The residue at position 1003 (serine 1003) is a Phosphoserine. Positions 1063 to 1076 are ligand-dependent nuclear receptor binding; that stretch reads LTKTNPILYYMLQK. Residues lysine 1108, lysine 1118, and lysine 1157 each participate in a glycyl lysine isopeptide (Lys-Gly) (interchain with G-Cter in SUMO2) cross-link. Positions 1121-1161 are repression domain 4; sequence FFNLRSPYNSHMGNNASRPHSTNGEVYGLLGNALTIKKESE.

Interacts with CTBP1, CTBP2, ERS1, HDAC1, HDAC2, HDAC5, HDAC6, NR2C2, NR3C1, NR3C2, YWHAH, JUN and FOS. Found in a complex with both NR3C1 and YWHAH. Interacts with NR2C1 (sumoylated form and via the ligand-binding domain); the interaction results in promoting the repressor activity of NR2C1. Interacts with RARA and RXRB homodimers and RARA/RXRB heterodimers in the presence of ligand. Interacts with HDAC1 and HDAC3 via its N-terminal domain. Interacts with ZNF366. Interacts with RORA. Post-translationally, acetylation abolishes interaction with CTBP1. Phosphorylation enhances interaction with YWHAH. Acetylation regulates its nuclear translocation and corepressive activity. Expressed in the embryonic placenta. In the adult, expression is strong in the testis and brain. Also expressed at a high level in the white adipose tissue. Expressed constantly but at a weaker level in the adult heart, lung, stomach and kidney. Expressed moderately in the skeletal muscle. Expressed at a low level in the adult spleen, liver and brown adipose tissue. Expressed in the ovary at a high level in granulosa cells and at a lower level in the thecal and interstitial compartments.

It localises to the nucleus. Functionally, modulates transcriptional repression by nuclear hormone receptors such as NR2C1, thyroid hormone receptor and retinoic acid receptor/RARA. Essential for cumulus expansion and follicle rupture during ovulation. Also controls the balance between fat accumulation and energy expenditure. Positive regulator of the circadian clock gene expression: stimulates transcription of BMAL1, CLOCK and CRY1 by acting as a coactivator for RORA and RORC. Involved in the regulation of ovarian function. Plays a role in renal development. The polypeptide is Nuclear receptor-interacting protein 1 (Mus musculus (Mouse)).